The primary structure comprises 99 residues: MASYQVRLINKKQDIDTTIEIDEETTILDGAEENGIELPFSCHSGSCSSCVGKVVEGEVDQSDQIFLDDEQMGKGFALLCVTYPRSNCTIKTHQEPYLA.

The 2Fe-2S ferredoxin-type domain occupies 4–96 (YQVRLINKKQ…NCTIKTHQEP (93 aa)). [2Fe-2S] cluster-binding residues include Cys-42, Cys-47, Cys-50, and Cys-80.

Belongs to the 2Fe2S plant-type ferredoxin family. [2Fe-2S] cluster is required as a cofactor.

Functionally, ferredoxins are iron-sulfur proteins that transfer electrons in a wide variety of metabolic reactions. Donates electrons to the nitrogenase. The chain is Ferredoxin, heterocyst (fdxH) from Nostoc sp. (strain PCC 7120 / SAG 25.82 / UTEX 2576).